Consider the following 1050-residue polypeptide: MDLGHSLFVVFTCFLMARCRTEIGKNITVVVMLPDNHLKYSFAFPRVFPAIRMAHDDIQKKGKLLRGYTINLLNHSTESQGAGCSESQAQIMAVDTKLYEKPDAFFGPGCVYSVASVGRFVNHWKLPLITAWAPAFGFDSKEEYRTIVRTGLSTTKLGEFAHYLHSHFNWTTRAFMLFHDLKVDDRPYYFISEGVFLVLRRENITVEAVPYDDQKNSDYREMISSLKSNGRIVYICGPLDTFLEFMRIFQNEGLPPEDYAIFYLDMFAKSILDKDYKPWESSDINWTDPIKLFKSVFVITAKEPDNPEYKAFQRELHARAKQEFSVQLEPSLEDIIAGCFYDGFMLYAQALNETLAEGGSQNDGINITQKMQNRRFWGVTGLVSTDKNNDRDIDFNLWAMTNHKTGQYGIVAYYNGTNKEIVWSETEKIQWPKGSPPLDNPPCVFSMDEPFCNEDQLPVLGIVAVGSGLALIIFGISSFLIYRKLKLEKELAGMLWRIRWEELQFESPNKYHKCAGSRLTISQRGSSYGSLITAHGKYQLFAKTGYFKGNLVAIKHVNKKRIELTRQVLFELKHMRDVQFNHLTRFIGACIDPPNICIVTEYCPRGSLQDILENESINLDWMFRYSLINDIVKGMNFLHNSYIGSHGNLKSSNCVVDSRFVLKITDYGLASFRSSCENEDSHALYAKKLWTAPELLIYDRHPPQGTQKGDVYSFGIILQEIALRNGPFYVDGMDLSPKEIVQKVRNGQKPYFRPTTDTSCHSEELSILMEGCWAEDPADRPDFSYIKIFVMKLNKEGSTSILNNLLSRMEQYANNLENLVEERTQAYLEEKRKAENLLYQILPHSVAEQLKRGETVQAEAFDSVTIYFSDIVGFTSMSAESTPLQVVTLLNDLYTCFDAIIDNFDVYKVETIGDAYMVVSDSQSRNGKLHAREIAGMSLALLEQVKTFKIRHRPNDQLRLRIGIHTGPVCAGVVGLKMPRYCLFGDTVNTASRMESNGEALKIHLSSATKEVLDEFGYFDLQLRGDVEMKGKGKMRTYWLLGEKTDVYVI.

A signal peptide spans 1–19 (MDLGHSLFVVFTCFLMARC). Residues 20–460 (RTEIGKNITV…FCNEDQLPVL (441 aa)) are Extracellular-facing. 2 N-linked (GlcNAc...) asparagine glycosylation sites follow: Asn26 and Asn74. A disulfide bridge links Cys84 with Cys110. N-linked (GlcNAc...) asparagine glycans are attached at residues Asn169, Asn203, Asn285, Asn352, Asn366, and Asn415. A disulfide bridge links Cys236 with Cys339. The helical transmembrane segment at 461–481 (GIVAVGSGLALIIFGISSFLI) threads the bilayer. Residues 482–1050 (YRKLKLEKEL…LGEKTDVYVI (569 aa)) lie on the Cytoplasmic side of the membrane. Residues 517-790 (SRLTISQRGS…PDFSYIKIFV (274 aa)) form the Protein kinase domain. The Guanylate cyclase domain occupies 865 to 995 (TIYFSDIVGF…DTVNTASRME (131 aa)).

It belongs to the adenylyl cyclase class-4/guanylyl cyclase family. Post-translationally, phosphorylated. Phosphorylation of the protein kinase-like domain is required for full activation by CNP. In terms of processing, glycosylated. In terms of tissue distribution, high levels found in liver, atrium and gill. Moderate levels found in brain and ventricle, and low levels in esophageal sphincter, stomach, posterior intestine and kidney.

Its subcellular location is the cell membrane. It carries out the reaction GTP = 3',5'-cyclic GMP + diphosphate. Receptor for the C-type natriuretic peptide NPPC/CNP hormone. Has guanylate cyclase activity upon binding of its ligand. May play a role in the regulation of skeletal growth. This is Atrial natriuretic peptide receptor 2 (npr2) from Anguilla japonica (Japanese eel).